Consider the following 184-residue polypeptide: ATP synthase subunit delta (184 aa).

This sequence belongs to the ATPase delta chain family. As to quaternary structure, F-type ATPases have 2 components, F(1) - the catalytic core - and F(0) - the membrane proton channel. F(1) has five subunits: alpha(3), beta(3), gamma(1), delta(1), epsilon(1). F(0) has three main subunits: a(1), b(2) and c(10-14). The alpha and beta chains form an alternating ring which encloses part of the gamma chain. F(1) is attached to F(0) by a central stalk formed by the gamma and epsilon chains, while a peripheral stalk is formed by the delta and b chains.

Its subcellular location is the cell membrane. In terms of biological role, f(1)F(0) ATP synthase produces ATP from ADP in the presence of a proton or sodium gradient. F-type ATPases consist of two structural domains, F(1) containing the extramembraneous catalytic core and F(0) containing the membrane proton channel, linked together by a central stalk and a peripheral stalk. During catalysis, ATP synthesis in the catalytic domain of F(1) is coupled via a rotary mechanism of the central stalk subunits to proton translocation. This protein is part of the stalk that links CF(0) to CF(1). It either transmits conformational changes from CF(0) to CF(1) or is implicated in proton conduction. The chain is ATP synthase subunit delta from Amoebophilus asiaticus (strain 5a2).